The following is a 315-amino-acid chain: Ribosomal protein L11 methyltransferase (315 aa).

Thr-164, Gly-185, Asp-207, and Asn-249 together coordinate S-adenosyl-L-methionine.

The protein belongs to the methyltransferase superfamily. PrmA family.

The protein resides in the cytoplasm. The enzyme catalyses L-lysyl-[protein] + 3 S-adenosyl-L-methionine = N(6),N(6),N(6)-trimethyl-L-lysyl-[protein] + 3 S-adenosyl-L-homocysteine + 3 H(+). Functionally, methylates ribosomal protein L11. This is Ribosomal protein L11 methyltransferase from Lactobacillus johnsonii (strain CNCM I-12250 / La1 / NCC 533).